The chain runs to 147 residues: Large ribosomal subunit protein bL9 (147 aa).

Belongs to the bacterial ribosomal protein bL9 family.

Functionally, binds to the 23S rRNA. This is Large ribosomal subunit protein bL9 from Halothermothrix orenii (strain H 168 / OCM 544 / DSM 9562).